The sequence spans 228 residues: Cytochrome c oxidase subunit 2 (228 aa).

Over 1-26 the chain is Mitochondrial intermembrane; the sequence is MSTWANLGLQDSASPLMEQLIFFHDH. A helical membrane pass occupies residues 27–48; that stretch reads ALLILVMITVLVGYLMFMLFFN. The Mitochondrial matrix segment spans residues 49 to 62; that stretch reads NYVNRFLLHGQLIE. The helical transmembrane segment at 63–82 threads the bilayer; that stretch reads MIWTILPAIILLFIALPSLR. Over 83 to 228 the chain is Mitochondrial intermembrane; the sequence is LLYLLDEINE…FIKWISSNNS (146 aa). Cu cation is bound by residues His-161, Cys-196, Glu-198, Cys-200, His-204, and Met-207. Glu-198 is a binding site for Mg(2+).

Belongs to the cytochrome c oxidase subunit 2 family. Component of the cytochrome c oxidase (complex IV, CIV), a multisubunit enzyme composed of a catalytic core of 3 subunits and several supernumerary subunits. The complex exists as a monomer or a dimer and forms supercomplexes (SCs) in the inner mitochondrial membrane with ubiquinol-cytochrome c oxidoreductase (cytochrome b-c1 complex, complex III, CIII). The cofactor is Cu cation.

It is found in the mitochondrion inner membrane. The catalysed reaction is 4 Fe(II)-[cytochrome c] + O2 + 8 H(+)(in) = 4 Fe(III)-[cytochrome c] + 2 H2O + 4 H(+)(out). Its function is as follows. Component of the cytochrome c oxidase, the last enzyme in the mitochondrial electron transport chain which drives oxidative phosphorylation. The respiratory chain contains 3 multisubunit complexes succinate dehydrogenase (complex II, CII), ubiquinol-cytochrome c oxidoreductase (cytochrome b-c1 complex, complex III, CIII) and cytochrome c oxidase (complex IV, CIV), that cooperate to transfer electrons derived from NADH and succinate to molecular oxygen, creating an electrochemical gradient over the inner membrane that drives transmembrane transport and the ATP synthase. Cytochrome c oxidase is the component of the respiratory chain that catalyzes the reduction of oxygen to water. Electrons originating from reduced cytochrome c in the intermembrane space (IMS) are transferred via the dinuclear copper A center (CU(A)) of subunit 2 and heme A of subunit 1 to the active site in subunit 1, a binuclear center (BNC) formed by heme A3 and copper B (CU(B)). The BNC reduces molecular oxygen to 2 water molecules using 4 electrons from cytochrome c in the IMS and 4 protons from the mitochondrial matrix. In Drosophila simulans (Fruit fly), this protein is Cytochrome c oxidase subunit 2 (mt:CoII).